The primary structure comprises 122 residues: Large ribosomal subunit protein uL14 (122 aa).

Belongs to the universal ribosomal protein uL14 family. In terms of assembly, part of the 50S ribosomal subunit. Forms a cluster with proteins L3 and L19. In the 70S ribosome, L14 and L19 interact and together make contacts with the 16S rRNA in bridges B5 and B8.

Binds to 23S rRNA. Forms part of two intersubunit bridges in the 70S ribosome. The chain is Large ribosomal subunit protein uL14 from Rippkaea orientalis (strain PCC 8801 / RF-1) (Cyanothece sp. (strain PCC 8801)).